Here is a 616-residue protein sequence, read N- to C-terminus: Chaperone protein HscA (616 aa).

The protein belongs to the heat shock protein 70 family.

Its function is as follows. Chaperone involved in the maturation of iron-sulfur cluster-containing proteins. Has a low intrinsic ATPase activity which is markedly stimulated by HscB. Involved in the maturation of IscU. The protein is Chaperone protein HscA of Serratia proteamaculans (strain 568).